A 302-amino-acid chain; its full sequence is MALQAQQQATPSPTRDRAGSGEWLADTEKLPGAAASPEDVVVASTHHAAAAARYVPPRATSHTAEPNPGRGGGGGWYSWNGGRRARHDPPAPRRQQPAKTPPPAPPLPAAPPPPPAASPAPAPRAPPPHAQVRSADRVVPAILSRKRRAAVMQRAALLARAAAAGLCLAALAVLASDTRRGWARDSYSNYAQFRYSEAVNVVGFLYSVFQFVALAELMRRNKHLIPHPKRDLFDFTMDQVVAYLLISSSSSATARASDLIENWGSDSFPSMANGSIAISFVAFVVFAICSLISAYNLFRRDM.

Polar residues predominate over residues 1–13 (MALQAQQQATPSP). The segment at 1–134 (MALQAQQQAT…APPPHAQVRS (134 aa)) is disordered. Topologically, residues 1-154 (MALQAQQQAT…RKRRAAVMQR (154 aa)) are cytoplasmic. Positions 40-60 (VVVASTHHAAAAARYVPPRAT) are enriched in low complexity. The segment covering 99-129 (KTPPPAPPLPAAPPPPPAASPAPAPRAPPPH) has biased composition (pro residues). A helical transmembrane segment spans residues 155–175 (AALLARAAAAGLCLAALAVLA). Topologically, residues 176-197 (SDTRRGWARDSYSNYAQFRYSE) are extracellular. Residues 198-218 (AVNVVGFLYSVFQFVALAELM) form a helical membrane-spanning segment. At 219–238 (RRNKHLIPHPKRDLFDFTMD) the chain is on the cytoplasmic side. A helical membrane pass occupies residues 239–256 (QVVAYLLISSSSSATARA). Residues 257–273 (SDLIENWGSDSFPSMAN) are Extracellular-facing. A helical transmembrane segment spans residues 274–294 (GSIAISFVAFVVFAICSLISA). Residues 295–302 (YNLFRRDM) lie on the Cytoplasmic side of the membrane.

Belongs to the Casparian strip membrane proteins (CASP) family. Homodimer and heterodimers.

Its subcellular location is the cell membrane. This is CASP-like protein 4A2 from Zea mays (Maize).